The primary structure comprises 57 residues: UPF0391 membrane protein RB0084 (57 aa).

The next 2 membrane-spanning stretches (helical) occupy residues 4–24 (WALI…SGVS) and 33–53 (ILFY…LAVG).

It belongs to the UPF0391 family.

The protein localises to the cell membrane. In Rhizobium meliloti (strain 1021) (Ensifer meliloti), this protein is UPF0391 membrane protein RB0084.